Consider the following 177-residue polypeptide: Ureidoglycolate lyase (177 aa).

The protein belongs to the ureidoglycolate lyase family. Homodimer. Requires Ni(2+) as cofactor.

The catalysed reaction is (S)-ureidoglycolate = urea + glyoxylate. It functions in the pathway nitrogen metabolism; (S)-allantoin degradation. Catalyzes the catabolism of the allantoin degradation intermediate (S)-ureidoglycolate, generating urea and glyoxylate. Involved in the utilization of allantoin as nitrogen source. The sequence is that of Ureidoglycolate lyase from Burkholderia cepacia (Pseudomonas cepacia).